Reading from the N-terminus, the 66-residue chain is Large ribosomal subunit protein bL35 (66 aa).

Belongs to the bacterial ribosomal protein bL35 family.

This Thermodesulfovibrio yellowstonii (strain ATCC 51303 / DSM 11347 / YP87) protein is Large ribosomal subunit protein bL35.